The sequence spans 205 residues: Urease accessory protein UreG (205 aa).

14 to 21 (GPVGSGKT) is a GTP binding site.

Belongs to the SIMIBI class G3E GTPase family. UreG subfamily. Homodimer. UreD, UreF and UreG form a complex that acts as a GTP-hydrolysis-dependent molecular chaperone, activating the urease apoprotein by helping to assemble the nickel containing metallocenter of UreC. The UreE protein probably delivers the nickel.

It localises to the cytoplasm. In terms of biological role, facilitates the functional incorporation of the urease nickel metallocenter. This process requires GTP hydrolysis, probably effectuated by UreG. The protein is Urease accessory protein UreG of Escherichia coli O157:H7.